Here is a 358-residue protein sequence, read N- to C-terminus: Neutral protease 2 homolog PABG_02362 (358 aa).

The signal sequence occupies residues 1 to 19 (MRRVSGILAVAAFTISAFA). Positions 20–182 (GVIQPVAKDA…FAAMNQFVKI (163 aa)) are excised as a propeptide. 2 disulfide bridges follow: Cys188–Cys259 and Cys266–Cys284. Asn249 carries N-linked (GlcNAc...) asparagine glycosylation. His309 provides a ligand contact to Zn(2+). Glu310 is a catalytic residue. Zn(2+) is bound by residues His313 and Asp324.

The protein belongs to the peptidase M35 family. Zn(2+) is required as a cofactor.

The protein resides in the secreted. The enzyme catalyses Preferential cleavage of bonds with hydrophobic residues in P1'. Also 3-Asn-|-Gln-4 and 8-Gly-|-Ser-9 bonds in insulin B chain.. Its function is as follows. Secreted metalloproteinase that allows assimilation of proteinaceous substrates. Shows high activities on basic nuclear substrates such as histone and protamine. The chain is Neutral protease 2 homolog PABG_02362 from Paracoccidioides brasiliensis (strain Pb03).